Here is a 96-residue protein sequence, read N- to C-terminus: Co-chaperonin GroES 2 (96 aa).

It belongs to the GroES chaperonin family. As to quaternary structure, heptamer of 7 subunits arranged in a ring. Interacts with the chaperonin GroEL.

It localises to the cytoplasm. Together with the chaperonin GroEL, plays an essential role in assisting protein folding. The GroEL-GroES system forms a nano-cage that allows encapsulation of the non-native substrate proteins and provides a physical environment optimized to promote and accelerate protein folding. GroES binds to the apical surface of the GroEL ring, thereby capping the opening of the GroEL channel. This chain is Co-chaperonin GroES 2, found in Vibrio cholerae serotype O1 (strain ATCC 39315 / El Tor Inaba N16961).